The chain runs to 461 residues: Kynurenine 3-monooxygenase (461 aa).

A run of 2 helical transmembrane segments spans residues 395 to 415 (TIMN…VTFS) and 432 to 452 (ILSR…AAGI).

The protein belongs to the aromatic-ring hydroxylase family. KMO subfamily. FAD is required as a cofactor.

The protein localises to the mitochondrion. The protein resides in the membrane. It catalyses the reaction L-kynurenine + NADPH + O2 + H(+) = 3-hydroxy-L-kynurenine + NADP(+) + H2O. Its pathway is cofactor biosynthesis; NAD(+) biosynthesis; quinolinate from L-kynurenine: step 1/3. Functionally, catalyzes the hydroxylation of L-kynurenine (L-Kyn) to form 3-hydroxy-L-kynurenine (L-3OHKyn). Required for synthesis of quinolinic acid. The protein is Kynurenine 3-monooxygenase of Caenorhabditis elegans.